A 493-amino-acid chain; its full sequence is Glycerol kinase (493 aa).

Residue Thr11 coordinates ADP. The ATP site is built by Thr11, Thr12, and Ser13. Thr11 serves as a coordination point for sn-glycerol 3-phosphate. Arg15 contributes to the ADP binding site. Arg80, Glu81, Tyr132, and Asp241 together coordinate sn-glycerol 3-phosphate. Glycerol-binding residues include Arg80, Glu81, Tyr132, Asp241, and Gln242. ADP-binding residues include Thr263 and Gly306. Residues Thr263, Gly306, Gln310, and Gly408 each coordinate ATP. ADP is bound at residue Gly408.

This sequence belongs to the FGGY kinase family.

It catalyses the reaction glycerol + ATP = sn-glycerol 3-phosphate + ADP + H(+). It functions in the pathway polyol metabolism; glycerol degradation via glycerol kinase pathway; sn-glycerol 3-phosphate from glycerol: step 1/1. With respect to regulation, inhibited by fructose 1,6-bisphosphate (FBP). Key enzyme in the regulation of glycerol uptake and metabolism. Catalyzes the phosphorylation of glycerol to yield sn-glycerol 3-phosphate. The polypeptide is Glycerol kinase (Cereibacter sphaeroides (strain KD131 / KCTC 12085) (Rhodobacter sphaeroides)).